The following is a 152-amino-acid chain: 3-hydroxyacyl-[acyl-carrier-protein] dehydratase FabZ (152 aa).

Histidine 58 is an active-site residue.

This sequence belongs to the thioester dehydratase family. FabZ subfamily.

It is found in the cytoplasm. The enzyme catalyses a (3R)-hydroxyacyl-[ACP] = a (2E)-enoyl-[ACP] + H2O. Functionally, involved in unsaturated fatty acids biosynthesis. Catalyzes the dehydration of short chain beta-hydroxyacyl-ACPs and long chain saturated and unsaturated beta-hydroxyacyl-ACPs. This is 3-hydroxyacyl-[acyl-carrier-protein] dehydratase FabZ from Prochlorococcus marinus (strain AS9601).